The primary structure comprises 126 residues: Small ribosomal subunit protein uS11 (126 aa).

The protein belongs to the universal ribosomal protein uS11 family. Part of the 30S ribosomal subunit.

In terms of biological role, located on the platform of the 30S subunit. The protein is Small ribosomal subunit protein uS11 of Methanosarcina mazei (strain ATCC BAA-159 / DSM 3647 / Goe1 / Go1 / JCM 11833 / OCM 88) (Methanosarcina frisia).